Here is a 302-residue protein sequence, read N- to C-terminus: Phosphoribosylaminoimidazole-succinocarboxamide synthase (302 aa).

It belongs to the SAICAR synthetase family.

The enzyme catalyses 5-amino-1-(5-phospho-D-ribosyl)imidazole-4-carboxylate + L-aspartate + ATP = (2S)-2-[5-amino-1-(5-phospho-beta-D-ribosyl)imidazole-4-carboxamido]succinate + ADP + phosphate + 2 H(+). It participates in purine metabolism; IMP biosynthesis via de novo pathway; 5-amino-1-(5-phospho-D-ribosyl)imidazole-4-carboxamide from 5-amino-1-(5-phospho-D-ribosyl)imidazole-4-carboxylate: step 1/2. This Cupriavidus metallidurans (strain ATCC 43123 / DSM 2839 / NBRC 102507 / CH34) (Ralstonia metallidurans) protein is Phosphoribosylaminoimidazole-succinocarboxamide synthase.